We begin with the raw amino-acid sequence, 49 residues long: Fungus-induced-related protein 16 (49 aa).

This Caenorhabditis elegans protein is Fungus-induced-related protein 16 (fipr-16).